Consider the following 147-residue polypeptide: Large ribosomal subunit protein bL9 (147 aa).

Belongs to the bacterial ribosomal protein bL9 family.

Binds to the 23S rRNA. The polypeptide is Large ribosomal subunit protein bL9 (Clostridium tetani (strain Massachusetts / E88)).